We begin with the raw amino-acid sequence, 153 residues long: MGLTSQLLPPLFFLLACAGNFVHGHKCDITLQEIIKTLNSLTEQKTLCTELTVTDIFAASKNTTEKETFCRAATVLRQFYSHHEKDTRCLGATAQQFHRHKQLIRFLKRLDRNLWGLAGLNSCPVKEANQSTLENFLERLKTIMREKYSKCSS.

Positions 1 to 24 (MGLTSQLLPPLFFLLACAGNFVHG) are cleaved as a signal peptide. 3 disulfide bridges follow: Cys27–Cys151, Cys48–Cys89, and Cys70–Cys123. Asn62 carries N-linked (GlcNAc...) asparagine glycosylation.

Belongs to the IL-4/IL-13 family. As to quaternary structure, interacts with IL4R. Interacts with IL13RA1.

The protein localises to the secreted. Its function is as follows. Cytokine secreted primarily by mast cells, T-cells, eosinophils, and basophils that plays a role in regulating antibody production, hematopoiesis and inflammation, and the development of effector T-cell responses. Induces the expression of class II MHC molecules on resting B-cells. Enhances both secretion and cell surface expression of IgE and IgG1. Also regulates the expression of the low affinity Fc receptor for IgE (CD23) on both lymphocytes and monocytes. Positively regulates IL31RA expression in macrophages. Stimulates autophagy in dendritic cells by interfering with mTORC1 signaling and through the induction of RUFY4. In addition, plays a critical role in higher functions of the normal brain, such as memory and learning. Upon binding to IL4, IL4R receptor dimerizes either with the common IL2R gamma chain/IL2RG to produce the type 1 signaling complex, located mainly on hematopoietic cells, or with the IL13RA1 to produce the type 2 complex, which is also expressed on nonhematopoietic cells. Engagement of both types of receptors initiates JAK3 and to a lower extend JAK1 phosphorylation leading to activation of the signal transducer and activator of transcription 6/STAT6. In Homo sapiens (Human), this protein is Interleukin-4 (IL4).